The primary structure comprises 378 residues: Dual-specificity RNA methyltransferase RlmN (378 aa).

Catalysis depends on glutamate 96, which acts as the Proton acceptor. In terms of domain architecture, Radical SAM core spans 102–340; it reads DNGRGTLCVS…ATVRTTRGDD (239 aa). Cysteines 109 and 345 form a disulfide. 3 residues coordinate [4Fe-4S] cluster: cysteine 116, cysteine 120, and cysteine 123. Residues 170–171, serine 202, 224–226, and asparagine 302 contribute to the S-adenosyl-L-methionine site; these read GE and SLH. The S-methylcysteine intermediate role is filled by cysteine 345.

This sequence belongs to the radical SAM superfamily. RlmN family. The cofactor is [4Fe-4S] cluster.

The protein localises to the cytoplasm. The catalysed reaction is adenosine(2503) in 23S rRNA + 2 reduced [2Fe-2S]-[ferredoxin] + 2 S-adenosyl-L-methionine = 2-methyladenosine(2503) in 23S rRNA + 5'-deoxyadenosine + L-methionine + 2 oxidized [2Fe-2S]-[ferredoxin] + S-adenosyl-L-homocysteine. The enzyme catalyses adenosine(37) in tRNA + 2 reduced [2Fe-2S]-[ferredoxin] + 2 S-adenosyl-L-methionine = 2-methyladenosine(37) in tRNA + 5'-deoxyadenosine + L-methionine + 2 oxidized [2Fe-2S]-[ferredoxin] + S-adenosyl-L-homocysteine. In terms of biological role, specifically methylates position 2 of adenine 2503 in 23S rRNA and position 2 of adenine 37 in tRNAs. m2A2503 modification seems to play a crucial role in the proofreading step occurring at the peptidyl transferase center and thus would serve to optimize ribosomal fidelity. The protein is Dual-specificity RNA methyltransferase RlmN of Hahella chejuensis (strain KCTC 2396).